Reading from the N-terminus, the 313-residue chain is L-lactate dehydrogenase 1 (313 aa).

Residues V15, D36, R41, and Y66 each coordinate NAD(+). Substrate-binding positions include Q83, R89, and 121-124; that span reads NPVD. Residues 119-121 and S144 contribute to the NAD(+) site; that span reads ASN. 149 to 152 contacts substrate; it reads DTAR. 2 residues coordinate beta-D-fructose 1,6-bisphosphate: R154 and H169. Residue H176 is the Proton acceptor of the active site. Y218 carries the post-translational modification Phosphotyrosine. Substrate is bound at residue T227.

The protein belongs to the LDH/MDH superfamily. LDH family. Homotetramer.

The protein resides in the cytoplasm. The enzyme catalyses (S)-lactate + NAD(+) = pyruvate + NADH + H(+). The protein operates within fermentation; pyruvate fermentation to lactate; (S)-lactate from pyruvate: step 1/1. Its activity is regulated as follows. Allosterically activated by fructose 1,6-bisphosphate (FBP). In terms of biological role, catalyzes the conversion of lactate to pyruvate. This chain is L-lactate dehydrogenase 1, found in Listeria innocua serovar 6a (strain ATCC BAA-680 / CLIP 11262).